A 181-amino-acid chain; its full sequence is Macro domain-containing protein in sno 5'region (181 aa).

The region spanning 1-172 is the Macro domain; the sequence is MTTITLVQGD…TFARELGDAG (172 aa).

Belongs to the MacroD-type family.

This chain is Macro domain-containing protein in sno 5'region, found in Streptomyces nogalater.